We begin with the raw amino-acid sequence, 236 residues long: Mediator of RNA polymerase II transcription subunit 20 (236 aa).

This sequence belongs to the Mediator complex subunit 20 family. Component of the Mediator complex.

Its subcellular location is the nucleus. Its function is as follows. Component of the Mediator complex, a coactivator involved in the regulated transcription of nearly all RNA polymerase II-dependent genes. Mediator functions as a bridge to convey information from gene-specific regulatory proteins to the basal RNA polymerase II transcription machinery. Mediator is recruited to promoters by direct interactions with regulatory proteins and serves as a scaffold for the assembly of a functional preinitiation complex with RNA polymerase II and the general transcription factors. This is Mediator of RNA polymerase II transcription subunit 20 (SRB2) from Debaryomyces hansenii (strain ATCC 36239 / CBS 767 / BCRC 21394 / JCM 1990 / NBRC 0083 / IGC 2968) (Yeast).